The sequence spans 207 residues: GTP cyclohydrolase 1 (207 aa).

Positions 94, 97, and 167 each coordinate Zn(2+).

Belongs to the GTP cyclohydrolase I family. As to quaternary structure, toroid-shaped homodecamer, composed of two pentamers of five dimers.

The enzyme catalyses GTP + H2O = 7,8-dihydroneopterin 3'-triphosphate + formate + H(+). The protein operates within cofactor biosynthesis; 7,8-dihydroneopterin triphosphate biosynthesis; 7,8-dihydroneopterin triphosphate from GTP: step 1/1. In Thermobifida fusca (strain YX), this protein is GTP cyclohydrolase 1.